The sequence spans 268 residues: Bidirectional sugar transporter N3 (268 aa).

The Extracellular portion of the chain corresponds to 1 to 7 (MAISHNT). Residues 8 to 28 (LAFTFGMLGNVISFLVFLAPI) form a helical membrane-spanning segment. Residues 10–96 (FTFGMLGNVI…ILYIIYAPRD (87 aa)) form the MtN3/slv 1 domain. Residues 29–42 (STFYRIYKKKSTEG) are Cytoplasmic-facing. A helical membrane pass occupies residues 43–63 (FQSLPYLVALFSSMLWLYYAL). Over 64-70 (LKKDAFL) the chain is Extracellular. A helical transmembrane segment spans residues 71–91 (LITINSFGCVVETIYIILYII). Residues 92–103 (YAPRDARNLTFK) are Cytoplasmic-facing. Residues 104 to 124 (LLSAMNVGSFALILIVTNYAV) form a helical membrane-spanning segment. Topologically, residues 125–131 (HGPLRVQ) are extracellular. In terms of domain architecture, MtN3/slv 2 spans 131 to 214 (QVLGWVCVSL…QMLLYAIYRN (84 aa)). A helical transmembrane segment spans residues 132-152 (VLGWVCVSLSVSVFAAPLSIV). Over 153 to 165 (AQVVRTKSVEFMP) the chain is Cytoplasmic. The helical transmembrane segment at 166-186 (FNLSFTLTLSATMWFGYGFFL) threads the bilayer. Over 187–190 (KDIC) the chain is Extracellular. The helical transmembrane segment at 191–211 (IXLPNVLGXVLGLLQMLLYAI) threads the bilayer. At 212–268 (YRNGGEKAMKKEKKAPIEPPKSIVIETQLEKIEQEKKNKDDDNEEKDKSEEPIGCGV) the chain is on the cytoplasmic side. Residues 234 to 262 (IVIETQLEKIEQEKKNKDDDNEEKDKSEE) are a coiled coil. Positions 243–262 (IEQEKKNKDDDNEEKDKSEE) are enriched in basic and acidic residues. The interval 243–268 (IEQEKKNKDDDNEEKDKSEEPIGCGV) is disordered.

Belongs to the SWEET sugar transporter family. As to quaternary structure, forms homooligomers and/or heterooligomers.

Its subcellular location is the cell membrane. Functionally, mediates both low-affinity uptake and efflux of sugar across the plasma membrane. This chain is Bidirectional sugar transporter N3 (N3), found in Medicago truncatula (Barrel medic).